Consider the following 455-residue polypeptide: Kynurenine--oxoglutarate transaminase 3 (455 aa).

Gly71 serves as a coordination point for substrate. Lys116 carries the post-translational modification N6-acetyllysine; alternate. Lys116 carries the post-translational modification N6-succinyllysine; alternate. Position 218 (Asn218) interacts with substrate. At Lys280 the chain carries N6-(pyridoxal phosphate)lysine. Arg430 contacts substrate.

Belongs to the class-I pyridoxal-phosphate-dependent aminotransferase family. As to quaternary structure, homodimer. It depends on pyridoxal 5'-phosphate as a cofactor.

It catalyses the reaction L-kynurenine + 2-oxoglutarate = kynurenate + L-glutamate + H2O. The catalysed reaction is L-kynurenine + glyoxylate = kynurenate + glycine + H2O. It carries out the reaction 3-hydroxy-L-kynurenine + glyoxylate = xanthurenate + glycine + H2O. The enzyme catalyses an S-substituted L-cysteine + H2O = a thiol + pyruvate + NH4(+). Its pathway is amino-acid degradation; L-kynurenine degradation; kynurenate from L-kynurenine: step 1/2. Catalyzes the irreversible transamination of the L-tryptophan metabolite L-kynurenine to form kynurenic acid (KA), an intermediate in the tryptophan catabolic pathway which is also a broad spectrum antagonist of the three ionotropic excitatory amino acid receptors among others. May catalyze the beta-elimination of S-conjugates and Se-conjugates of L-(seleno)cysteine, resulting in the cleavage of the C-S or C-Se bond. Has transaminase activity towards L-kynurenine, tryptophan, phenylalanine, serine, cysteine, methionine, histidine, glutamine and asparagine with glyoxylate as an amino group acceptor (in vitro). Has lower activity with 2-oxoglutarate as amino group acceptor (in vitro). This is Kynurenine--oxoglutarate transaminase 3 from Bos taurus (Bovine).